The primary structure comprises 769 residues: PDZ domain-containing protein 4 (769 aa).

The PDZ domain maps to 130–214 (EVELYKSSHR…TNISLLVARP (85 aa)). Residues 221–315 (RWKDSDRDDF…TNTPGSLRKF (95 aa)) form a disordered region. Residues 229–239 (DFLDDFGSENE) are compositionally biased toward acidic residues. Serine 236 is subject to Phosphoserine. The segment covering 282-298 (RTDESTRNEESSEHDLL) has biased composition (basic and acidic residues). Residues 389 to 419 (VNRNESLGHEMAMLEEELRHLEFKCRNILRA) are a coiled coil. Residues 445–579 (ASEPKKHELS…RHRGQGQEGE (135 aa)) form a disordered region. Residues 447–467 (EPKKHELSDISELPEKSDKDS) show a composition bias toward basic and acidic residues. At serine 454 the chain carries Phosphoserine. Residues 468 to 479 (TSAYNTGESCRS) show a composition bias toward polar residues. A compositionally biased stretch (basic and acidic residues) spans 530–547 (LSRDPEAGRRQHAEERGR).

As to expression, brain-specific. Expressed in fetal and adult brain. Up-regulated in synovial carcinomas.

It is found in the cytoplasm. Its subcellular location is the cell cortex. This is PDZ domain-containing protein 4 (PDZD4) from Homo sapiens (Human).